Here is a 243-residue protein sequence, read N- to C-terminus: Orotidine 5'-phosphate decarboxylase (243 aa).

Substrate-binding positions include aspartate 16, lysine 38, 65-74, threonine 120, arginine 181, glutamine 190, glycine 210, and arginine 211; that span reads DLKLHDIPNT. Lysine 67 serves as the catalytic Proton donor.

The protein belongs to the OMP decarboxylase family. Type 1 subfamily. As to quaternary structure, homodimer.

It carries out the reaction orotidine 5'-phosphate + H(+) = UMP + CO2. It functions in the pathway pyrimidine metabolism; UMP biosynthesis via de novo pathway; UMP from orotate: step 2/2. In terms of biological role, catalyzes the decarboxylation of orotidine 5'-monophosphate (OMP) to uridine 5'-monophosphate (UMP). The polypeptide is Orotidine 5'-phosphate decarboxylase (Bradyrhizobium sp. (strain ORS 278)).